A 220-amino-acid chain; its full sequence is Nicotinamidase (220 aa).

D11 is an active-site residue. Zn(2+) is bound by residues D53, H55, and H94. K119 is a catalytic residue. The active-site Nucleophile is the C163.

The protein belongs to the isochorismatase family.

Its subcellular location is the cytoplasm. It localises to the nucleus. The protein localises to the peroxisome. The enzyme catalyses nicotinamide + H2O = nicotinate + NH4(+). The protein operates within cofactor biosynthesis; nicotinate biosynthesis; nicotinate from nicotinamide: step 1/1. Its function is as follows. Catalyzes the deamidation of nicotinamide, an early step in the NAD(+) salvage pathway. The protein is Nicotinamidase (pnc1) of Schizosaccharomyces pombe (strain 972 / ATCC 24843) (Fission yeast).